The following is a 378-amino-acid chain: Alginate lyase (378 aa).

A signal peptide spans 1-28; the sequence is MQTPKLIRPTLLSMAILSSMAWATGASA. Residues 67–68, 140–141, and Tyr258 each bind substrate; these read SK and HT. The segment at 359 to 378 is disordered; the sequence is LTKVYDPSHEKGDKGDNDGS. The segment covering 364–378 has biased composition (basic and acidic residues); the sequence is DPSHEKGDKGDNDGS.

It belongs to the polysaccharide lyase 5 family.

It localises to the periplasm. It catalyses the reaction Eliminative cleavage of alginate to give oligosaccharides with 4-deoxy-alpha-L-erythro-hex-4-enuronosyl groups at their non-reducing ends and beta-D-mannuronate at their reducing end.. Functionally, catalyzes the depolymerization of alginate by cleaving the beta-1,4 glycosidic bond between two adjacent sugar residues via a beta-elimination mechanism. May serve to degrade mislocalized alginate that is trapped in the periplasmic space. This Pseudomonas syringae pv. syringae (strain B728a) protein is Alginate lyase.